The primary structure comprises 178 residues: Female-specific protein transformer (178 aa).

2 stretches are compositionally biased toward basic and acidic residues: residues 1–18 (MKMD…DSHG) and 25–40 (RERE…DSKK). Positions 1-117 (MKMDADSSCG…RRYNPPPKII (117 aa)) are disordered. 2 stretches are compositionally biased toward basic residues: residues 59-73 (RRLR…RRSA) and 81-108 (RRHR…RSPR).

It localises to the nucleus speckle. Member of the regulatory pathway controlling female somatic sexual differentiation, regulated by Sxl. Activates dsx female-specific splicing by promoting the formation of a splicing enhancer complex which consists of tra, tra2 and sr proteins. This is Female-specific protein transformer (tra) from Drosophila erecta (Fruit fly).